The sequence spans 630 residues: Transferrin-binding protein B (630 aa).

A signal peptide spans 1–17 (MKSVPLITGGLSFLLSA). A lipid anchor (N-palmitoyl cysteine) is attached at C18. C18 carries the S-diacylglycerol cysteine lipid modification. Disordered regions lie at residues 26–53 (DVDD…KSNL), 280–301 (VTPT…LEGG), and 591–613 (NNPT…SPNA). A compositionally biased stretch (polar residues) spans 32–50 (NPSSSKPRYQDDTSSSRTK).

It belongs to the TbpB family.

The protein localises to the cell outer membrane. It localises to the cell surface. In terms of biological role, haemophilus acquires iron by extracting it from serum transferrin (TF) in its human host. Acts as a transferrin receptor and is required for transferrin utilization. The sequence is that of Transferrin-binding protein B from Haemophilus influenzae (strain 86-028NP).